Reading from the N-terminus, the 139-residue chain is Cystatin-1 (139 aa).

The first 22 residues, 1–22, serve as a signal peptide directing secretion; it reads MHSRLPVPASLCLLLLLPSVLP. One can recognise a Cystatin domain in the interval 27–127; the sequence is GGLSPRDVTD…CHFEVWSRPW (101 aa). A Secondary area of contact motif is present at residues 71–75; the sequence is QVVSG. Disulfide bonds link C89–C105 and C118–C138.

It belongs to the cystatin family. As to expression, expressed by the venom gland.

Its subcellular location is the secreted. Its function is as follows. Inhibits various C1 cysteine proteases including cathepsin L, papain and cathepsin B. This protein has no toxic activity and its function in the venom is unknown. It may play a role as housekeeping or regulatory protein. In Crotalus adamanteus (Eastern diamondback rattlesnake), this protein is Cystatin-1.